A 362-amino-acid polypeptide reads, in one-letter code: Alanine racemase (362 aa).

Lys-33 serves as the catalytic Proton acceptor; specific for D-alanine. Lys-33 bears the N6-(pyridoxal phosphate)lysine mark. Arg-129 serves as a coordination point for substrate. Tyr-254 (proton acceptor; specific for L-alanine) is an active-site residue. Residue Met-302 coordinates substrate.

Belongs to the alanine racemase family. Requires pyridoxal 5'-phosphate as cofactor.

It catalyses the reaction L-alanine = D-alanine. It functions in the pathway amino-acid biosynthesis; D-alanine biosynthesis; D-alanine from L-alanine: step 1/1. Catalyzes the interconversion of L-alanine and D-alanine. May also act on other amino acids. The chain is Alanine racemase (alr) from Xylella fastidiosa (strain 9a5c).